Consider the following 322-residue polypeptide: Probable F-box protein At1g60180 (322 aa).

The F-box domain occupies 45-88 (FCELSDECIAKILSGCPILESLTLSHCIYLTVLDLSKSLRLRTL).

This Arabidopsis thaliana (Mouse-ear cress) protein is Probable F-box protein At1g60180.